The primary structure comprises 134 residues: Small ribosomal subunit protein bS6 (134 aa).

A disordered region spans residues Glu-99 to Gly-134. The span at Gln-105–Gly-134 shows a compositional bias: basic and acidic residues.

It belongs to the bacterial ribosomal protein bS6 family.

Its function is as follows. Binds together with bS18 to 16S ribosomal RNA. This is Small ribosomal subunit protein bS6 from Methylobacterium sp. (strain 4-46).